Consider the following 481-residue polypeptide: Leukocyte immunoglobulin-like receptor subfamily A member 6 (481 aa).

The first 23 residues, 1–23 (MTPALTALLCLGLSLGPRTHVQA), serve as a signal peptide directing secretion. One can recognise an Ig-like C2-type 1 domain in the interval 24–118 (GPLPKPTLWA…PSDPLELVVT (95 aa)). Residues 24–447 (GPLPKPTLWA…SHAKDYTVEN (424 aa)) are Extracellular-facing. A disulfide bridge links Cys49 with Cys98. An N-linked (GlcNAc...) asparagine glycan is attached at Asn139. 2 disulfide bridges follow: Cys144–Cys196 and Cys245–Cys296. 2 Ig-like C2-type domains span residues 225 to 314 (PSLL…DPLN) and 323 to 408 (DRVS…HLLS). N-linked (GlcNAc...) asparagine glycans are attached at residues Asn301 and Asn340. Cys345 and Cys396 form a disulfide bridge. A disordered region spans residues 418–439 (VSGPSGGPSLPPTGPPSTPASH). The segment covering 426-435 (SLPPTGPPST) has biased composition (pro residues). The chain crosses the membrane as a helical span at residues 448–468 (LIRMGMAGLVLVVLGILLFEA). Topologically, residues 469 to 481 (QHSQRSPQDAARR) are cytoplasmic.

It localises to the membrane. Its function is as follows. May act as receptor for class I MHC antigens. In Pan troglodytes (Chimpanzee), this protein is Leukocyte immunoglobulin-like receptor subfamily A member 6 (LILRA6).